Consider the following 342-residue polypeptide: N-acetyl-gamma-glutamyl-phosphate reductase (342 aa).

The active site involves Cys-147.

Belongs to the NAGSA dehydrogenase family. Type 1 subfamily.

It is found in the cytoplasm. It catalyses the reaction N-acetyl-L-glutamate 5-semialdehyde + phosphate + NADP(+) = N-acetyl-L-glutamyl 5-phosphate + NADPH + H(+). Its pathway is amino-acid biosynthesis; L-arginine biosynthesis; N(2)-acetyl-L-ornithine from L-glutamate: step 3/4. Catalyzes the NADPH-dependent reduction of N-acetyl-5-glutamyl phosphate to yield N-acetyl-L-glutamate 5-semialdehyde. The protein is N-acetyl-gamma-glutamyl-phosphate reductase of Campylobacter jejuni subsp. jejuni serotype O:23/36 (strain 81-176).